We begin with the raw amino-acid sequence, 86 residues long: MHAYVYKSQRKQDTFVYLATRDDFSGLPAAVQAQLAPFTFVLDVALTPERRLAQADAATVREALGKHGFYLQLPKTIVLAGECDYD.

The YcgL domain occupies 1 to 83 (MHAYVYKSQR…PKTIVLAGEC (83 aa)).

The polypeptide is YcgL domain-containing protein XAC4085 (Xanthomonas axonopodis pv. citri (strain 306)).